The following is a 224-amino-acid chain: Cytidylate kinase (224 aa).

11–19 (GPAAAGKST) is an ATP binding site.

Belongs to the cytidylate kinase family. Type 1 subfamily.

It is found in the cytoplasm. It carries out the reaction CMP + ATP = CDP + ADP. It catalyses the reaction dCMP + ATP = dCDP + ADP. The polypeptide is Cytidylate kinase (Listeria welshimeri serovar 6b (strain ATCC 35897 / DSM 20650 / CCUG 15529 / CIP 8149 / NCTC 11857 / SLCC 5334 / V8)).